The primary structure comprises 435 residues: Putative F-box/kelch-repeat protein At1g13200 (435 aa).

A disordered region spans residues 1–29 (MKDAEKREVIASSSLQRKRNRGRRLRKRR). Residues 16–29 (QRKRNRGRRLRKRR) are compositionally biased toward basic residues. An F-box domain is found at 37-82 (LMVPSSLPNDVLEEIFLRFPVKALIRLKSLSKQWRSTIESRSFEER). Kelch repeat units lie at residues 164 to 217 (SVYV…DYKL), 224 to 270 (DKYI…PASA), 273 to 317 (SVYW…HIDM), and 322 to 368 (NSLC…EKRD).

The protein is Putative F-box/kelch-repeat protein At1g13200 of Arabidopsis thaliana (Mouse-ear cress).